The chain runs to 221 residues: UPF0758 protein ECA0145 (221 aa).

The MPN domain occupies 99–221 (AMLNPEATGQ…FVSFAERGWI (123 aa)). Zn(2+)-binding residues include histidine 170, histidine 172, and aspartate 183. The JAMM motif signature appears at 170-183 (HNHPSGKAEPSQAD).

This sequence belongs to the UPF0758 family. YicR subfamily.

The polypeptide is UPF0758 protein ECA0145 (Pectobacterium atrosepticum (strain SCRI 1043 / ATCC BAA-672) (Erwinia carotovora subsp. atroseptica)).